The primary structure comprises 151 residues: Putative truncated GMC-type inactive oxidoreductase L893 (151 aa).

The protein belongs to the GMC oxidoreductase family.

The protein resides in the virion. This chain is Putative truncated GMC-type inactive oxidoreductase L893, found in Acanthamoeba polyphaga (Amoeba).